The following is a 549-amino-acid chain: Probable protein kinase UbiB (549 aa).

One can recognise a Protein kinase domain in the interval 123-501 (DFDETPLASA…QQQAHKSNYM (379 aa)). ATP contacts are provided by residues 129–137 (LASASISQV) and K152. Residue D287 is the Proton acceptor of the active site. A run of 2 helical transmembrane segments spans residues 499 to 516 (NYML…TLLF) and 521 to 540 (TLWS…FIGW).

The protein belongs to the ABC1 family. UbiB subfamily.

The protein resides in the cell inner membrane. The protein operates within cofactor biosynthesis; ubiquinone biosynthesis [regulation]. In terms of biological role, is probably a protein kinase regulator of UbiI activity which is involved in aerobic coenzyme Q (ubiquinone) biosynthesis. The protein is Probable protein kinase UbiB of Shewanella sp. (strain W3-18-1).